The primary structure comprises 102 residues: Apolipoprotein A-II (102 aa).

Residues 1 to 18 (MKLLAMVALLVTICSLEG) form the signal peptide. Met49 bears the Methionine sulfoxide mark.

This sequence belongs to the apolipoprotein A2 family. In terms of assembly, monomer. Interacts with NAXE and NDRG1. In terms of tissue distribution, plasma.

The protein localises to the secreted. In terms of biological role, may stabilize HDL (high density lipoprotein) structure by its association with lipids, and affect the HDL metabolism. This Rattus norvegicus (Rat) protein is Apolipoprotein A-II (Apoa2).